We begin with the raw amino-acid sequence, 123 residues long: Insulin-like peptide-1 (123 aa).

An N-terminal signal peptide occupies residues M1 to G24. 4 disulfide bridges follow: C29-C106, C41-C109, C53-C122, and C108-C113. Position 34 is a 4-hydroxyproline; partial (P34). Residues E59 to R102 constitute a propeptide, c peptide. At E107 the chain carries 4-carboxyglutamate. A 4-carboxyglutamate; partial modification is found at E117.

The protein belongs to the insulin family. In terms of assembly, heterodimer of A and B chains; disulfide-linked. In terms of tissue distribution, expressed by the venom duct.

The protein localises to the secreted. Its function is as follows. This venom insulin facilitates prey capture by rapidly inducing hypoglycemic shock. Intraperitoneal injection of this peptide into zebrafish lowers blood glucose with the same potency than human insulin. In vivo, when applied to water, this peptide reduces overall locomotor activity of zebrafish larvae, observed as a significant decrease in the percentage of time spent swimming and movement frequency. This Conus victoriae (Queen Victoria cone) protein is Insulin-like peptide-1.